We begin with the raw amino-acid sequence, 409 residues long: Elongation factor Tu, plastid (409 aa).

In terms of domain architecture, tr-type G spans K10–I214. The interval G19 to T26 is G1. G19 to T26 provides a ligand contact to GTP. T26 serves as a coordination point for Mg(2+). A G2 region spans residues G60–N64. Positions D81 to G84 are G3. Residues D81–H85 and N136–D139 contribute to the GTP site. The tract at residues N136–D139 is G4. The G5 stretch occupies residues S174–L176.

This sequence belongs to the TRAFAC class translation factor GTPase superfamily. Classic translation factor GTPase family. EF-Tu/EF-1A subfamily.

It localises to the plastid. It catalyses the reaction GTP + H2O = GDP + phosphate + H(+). Its function is as follows. GTP hydrolase that promotes the GTP-dependent binding of aminoacyl-tRNA to the A-site of ribosomes during protein biosynthesis. The polypeptide is Elongation factor Tu, plastid (tufA) (Euglena longa (Euglenophycean alga)).